The primary structure comprises 78 residues: LYR motif-containing protein 9 (78 aa).

Belongs to the complex I LYR family. LYRM9 subfamily.

This chain is LYR motif-containing protein 9 (lyrm9), found in Danio rerio (Zebrafish).